We begin with the raw amino-acid sequence, 228 residues long: Cytochrome b-c1 complex subunit Rieske, mitochondrial (228 aa).

Residues 1–26 constitute a mitochondrion transit peptide; it reads MLAKQFISKSLASSLRRLLPVSSTAS. Residues 27–63 lie on the Mitochondrial matrix side of the membrane; that stretch reads SLKGSMMTIPKFTSIRTYTDSPEMPDFSEYQTKSTGD. Residues 64-93 form a helical membrane-spanning segment; that stretch reads RSRVISYAMVGTMGALTAAGAQATVHDFLA. Residues 94–228 lie on the Mitochondrial intermembrane side of the membrane; sequence SWSASADVLA…TFEGSKIIIG (135 aa). One can recognise a Rieske domain in the interval 139–227; it reads IQEANSVDIS…YTFEGSKIII (89 aa). Residues C172, H174, C191, and H194 each coordinate [2Fe-2S] cluster. The cysteines at positions 177 and 193 are disulfide-linked.

This sequence belongs to the Rieske iron-sulfur protein family. As to quaternary structure, component of the ubiquinol-cytochrome c oxidoreductase (cytochrome b-c1 complex, complex III, CIII), a multisubunit enzyme composed of 3 respiratory subunits cytochrome b, cytochrome c1 and Rieske protein, 2 core protein subunits, and additional low-molecular weight protein subunits. The complex exists as an obligatory dimer and forms supercomplexes (SCs) in the inner mitochondrial membrane with cytochrome c oxidase (complex IV, CIV). [2Fe-2S] cluster serves as cofactor.

Its subcellular location is the mitochondrion inner membrane. It catalyses the reaction a quinol + 2 Fe(III)-[cytochrome c](out) = a quinone + 2 Fe(II)-[cytochrome c](out) + 2 H(+)(out). Functionally, component of the ubiquinol-cytochrome c oxidoreductase, a multisubunit transmembrane complex that is part of the mitochondrial electron transport chain which drives oxidative phosphorylation. The respiratory chain contains 3 multisubunit complexes succinate dehydrogenase (complex II, CII), ubiquinol-cytochrome c oxidoreductase (cytochrome b-c1 complex, complex III, CIII) and cytochrome c oxidase (complex IV, CIV), that cooperate to transfer electrons derived from NADH and succinate to molecular oxygen, creating an electrochemical gradient over the inner membrane that drives transmembrane transport and the ATP synthase. The cytochrome b-c1 complex catalyzes electron transfer from ubiquinol to cytochrome c, linking this redox reaction to translocation of protons across the mitochondrial inner membrane, with protons being carried across the membrane as hydrogens on the quinol. In the process called Q cycle, 2 protons are consumed from the matrix, 4 protons are released into the intermembrane space and 2 electrons are passed to cytochrome c. The Rieske protein is a catalytic core subunit containing a [2Fe-2S] iron-sulfur cluster. It cycles between 2 conformational states during catalysis to transfer electrons from the quinol bound in the Q(0) site in cytochrome b to cytochrome c1. The protein is Cytochrome b-c1 complex subunit Rieske, mitochondrial (rip1) of Schizosaccharomyces pombe (strain 972 / ATCC 24843) (Fission yeast).